Reading from the N-terminus, the 211-residue chain is Urease accessory protein UreG (211 aa).

Gly-11–Thr-18 lines the GTP pocket.

This sequence belongs to the SIMIBI class G3E GTPase family. UreG subfamily. Homodimer. UreD, UreF and UreG form a complex that acts as a GTP-hydrolysis-dependent molecular chaperone, activating the urease apoprotein by helping to assemble the nickel containing metallocenter of UreC. The UreE protein probably delivers the nickel.

The protein resides in the cytoplasm. Functionally, facilitates the functional incorporation of the urease nickel metallocenter. This process requires GTP hydrolysis, probably effectuated by UreG. This is Urease accessory protein UreG from Photorhabdus laumondii subsp. laumondii (strain DSM 15139 / CIP 105565 / TT01) (Photorhabdus luminescens subsp. laumondii).